The chain runs to 277 residues: tRNA pseudouridine synthase A (277 aa).

Catalysis depends on aspartate 57, which acts as the Nucleophile. Tyrosine 115 is a binding site for substrate.

This sequence belongs to the tRNA pseudouridine synthase TruA family. In terms of assembly, homodimer.

The enzyme catalyses uridine(38/39/40) in tRNA = pseudouridine(38/39/40) in tRNA. Functionally, formation of pseudouridine at positions 38, 39 and 40 in the anticodon stem and loop of transfer RNAs. In Nitratidesulfovibrio vulgaris (strain DSM 19637 / Miyazaki F) (Desulfovibrio vulgaris), this protein is tRNA pseudouridine synthase A.